The following is a 125-amino-acid chain: Glutaredoxin-C1 (125 aa).

The Glutaredoxin domain occupies valine 19–alanine 119. An intrachain disulfide couples cysteine 39 to cysteine 42.

It belongs to the glutaredoxin family. CPYC subfamily.

The protein resides in the cytoplasm. Its function is as follows. Has a glutathione-disulfide oxidoreductase activity in the presence of NADPH and glutathione reductase. Reduces low molecular weight disulfides and proteins. This is Glutaredoxin-C1 (GRXC1) from Arabidopsis thaliana (Mouse-ear cress).